Here is a 973-residue protein sequence, read N- to C-terminus: DNA repair protein rhp26 (973 aa).

Residues 35-107 adopt a coiled-coil conformation; the sequence is ESREIEKKRL…DIKRRLNNED (73 aa). The disordered stretch occupies residues 230 to 251; it reads RDQASASENNKDRGEFEGKDEW. The span at 238-251 shows a compositional bias: basic and acidic residues; the sequence is NNKDRGEFEGKDEW. In terms of domain architecture, Helicase ATP-binding spans 289 to 490; it reads WELYCQEAGG…WNLFDFVFPG (202 aa). 302-309 contributes to the ATP binding site; the sequence is DEMGLGKT. The segment at 367–386 is disordered; sequence SREKRQYESDASESEAEESK. Residues 441-444 carry the DEAH box motif; the sequence is DEGH. Residues 629–789 form the Helicase C-terminal domain; the sequence is VIRALLTLWK…RRFFKMTDLH (161 aa). Disordered stretches follow at residues 803–846, 863–882, and 930–973; these read ETGS…KGKK, KYKP…STLG, and AVSS…KQRR. Over residues 834–846 the composition is skewed to basic residues; the sequence is DRKKHKIHDKGKK. Polar residues-rich tracts occupy residues 868–882 and 947–965; these read QESN…STLG and STNV…SSTL.

The protein resides in the cytoplasm. The protein localises to the nucleus. Involved in transcription-coupled repair (TCR). The polypeptide is DNA repair protein rhp26 (rhp26) (Schizosaccharomyces pombe (strain 972 / ATCC 24843) (Fission yeast)).